A 363-amino-acid chain; its full sequence is Ribosome-binding ATPase YchF (363 aa).

In terms of domain architecture, OBG-type G spans 3 to 256 (FKCGIVGLPN…LDDDEKIEFL (254 aa)). 12 to 17 (NVGKST) provides a ligand contact to ATP. Mg(2+)-binding residues include serine 16 and threonine 36. Residues 278–361 (NLQTYFTAGV…QDGDVMHFRF (84 aa)) enclose the TGS domain.

This sequence belongs to the TRAFAC class OBG-HflX-like GTPase superfamily. OBG GTPase family. YchF/OLA1 subfamily. The cofactor is Mg(2+).

Its function is as follows. ATPase that binds to both the 70S ribosome and the 50S ribosomal subunit in a nucleotide-independent manner. The chain is Ribosome-binding ATPase YchF from Pasteurella multocida (strain Pm70).